Consider the following 623-residue polypeptide: DNA-directed RNA polymerase subunit beta' (623 aa).

Residues Cys-70, Cys-72, Cys-85, and Cys-88 each contribute to the Zn(2+) site. Mg(2+) contacts are provided by Asp-466, Asp-468, and Asp-470.

This sequence belongs to the RNA polymerase beta' chain family. RpoC1 subfamily. In terms of assembly, in plastids the minimal PEP RNA polymerase catalytic core is composed of four subunits: alpha, beta, beta', and beta''. When a (nuclear-encoded) sigma factor is associated with the core the holoenzyme is formed, which can initiate transcription. Mg(2+) is required as a cofactor. Requires Zn(2+) as cofactor.

It is found in the plastid. The protein resides in the chloroplast. The enzyme catalyses RNA(n) + a ribonucleoside 5'-triphosphate = RNA(n+1) + diphosphate. Functionally, DNA-dependent RNA polymerase catalyzes the transcription of DNA into RNA using the four ribonucleoside triphosphates as substrates. This is DNA-directed RNA polymerase subunit beta' from Rhodomonas salina (Cryptomonas salina).